The sequence spans 1627 residues: Pappalysin-1 (1627 aa).

An N-terminal signal peptide occupies residues M1–A22. The propeptide occupies E23–R81. The interval E23–F99 is disordered. The segment covering A42–A51 has biased composition (low complexity). Cystine bridges form between C144–C235, C327–C622, C332–C657, C414–C428, C424–C440, C457–C473, C474–C485, C583–C600, C587–C612, C710–C878, C713–C881, C753–C835, C775–C781, C947–C975, C960–C971, C983–C990, and C999–C1011. The tract at residues M272–C583 is metalloprotease. 2 N-linked (GlcNAc...) asparagine glycosylation sites follow: N390 and N402. Residue N429 is glycosylated (N-linked (GlcNAc...) asparagine). N480 is a glycosylation site (N-linked (GlcNAc...) asparagine). H562 lines the Zn(2+) pocket. E563 is a catalytic residue. Zn(2+)-binding residues include H566 and H572. 3 N-linked (GlcNAc...) asparagine glycosylation sites follow: N601, N619, and N725. Positions S733–K754 are disordered. Positions S739–Q751 are enriched in basic and acidic residues. N825 carries N-linked (GlcNAc...) asparagine glycosylation. Residue N1026 is glycosylated (N-linked (GlcNAc...) asparagine). 19 disulfides stabilise this stretch: C1036–C1070, C1051–C1139, C1192–C1205, C1215–C1269, C1227–C1238, C1242–C1280, C1285–C1329, C1300–C1310, C1314–C1342, C1346–C1399, C1362–C1373, C1377–C1410, C1415–C1458, C1428–C1438, C1442–C1471, C1478–C1539, C1492–C1502, C1506–C1554, and C1558–C1576. 5 Sushi domains span residues T1213–P1282, V1283–L1344, M1345–P1412, V1413–E1473, and G1476–K1556. 2 N-linked (GlcNAc...) asparagine glycosylation sites follow: N1222 and N1226. N-linked (GlcNAc...) asparagine glycosylation occurs at N1323. N1465 is a glycosylation site (N-linked (GlcNAc...) asparagine). Residue N1519 is glycosylated (N-linked (GlcNAc...) asparagine).

This sequence belongs to the peptidase M43B family. As to quaternary structure, homodimer; disulfide-linked. In pregnancy serum, predominantly found as a disulfide-linked 2:2 heterotetramer with the proform of PRG2. Zn(2+) serves as cofactor. Post-translationally, there appear to be no free sulfhydryl groups. High levels in placenta and pregnancy serum. In placenta, expressed in X cells in septa and anchoring villi, and in syncytiotrophoblasts in the chorionic villi. Lower levels are found in a variety of other tissues including kidney, myometrium, endometrium, ovaries, breast, prostate, bone marrow, colon, fibroblasts and osteoblasts.

The protein localises to the secreted. The enzyme catalyses Cleavage of the 135-Met-|-Lys-136 bond in insulin-like growth factor binding protein (IGFBP)-4, and the 143-Ser-|-Lys-144 bond in IGFBP-5.. With respect to regulation, inhibited by complexation with the proform of PRG2. Its function is as follows. Metalloproteinase which specifically cleaves IGFBP-4 and IGFBP-5, resulting in release of bound IGF. Cleavage of IGFBP-4 is dramatically enhanced by the presence of IGF, whereas cleavage of IGFBP-5 is slightly inhibited by the presence of IGF. This Homo sapiens (Human) protein is Pappalysin-1 (PAPPA).